We begin with the raw amino-acid sequence, 274 residues long: Ribosomal RNA small subunit methyltransferase A (274 aa).

S-adenosyl-L-methionine-binding residues include N28, L30, G55, E77, D103, and N122.

It belongs to the class I-like SAM-binding methyltransferase superfamily. rRNA adenine N(6)-methyltransferase family. RsmA subfamily.

It localises to the cytoplasm. It catalyses the reaction adenosine(1518)/adenosine(1519) in 16S rRNA + 4 S-adenosyl-L-methionine = N(6)-dimethyladenosine(1518)/N(6)-dimethyladenosine(1519) in 16S rRNA + 4 S-adenosyl-L-homocysteine + 4 H(+). Functionally, specifically dimethylates two adjacent adenosines (A1518 and A1519) in the loop of a conserved hairpin near the 3'-end of 16S rRNA in the 30S particle. May play a critical role in biogenesis of 30S subunits. The protein is Ribosomal RNA small subunit methyltransferase A of Sinorhizobium medicae (strain WSM419) (Ensifer medicae).